The sequence spans 217 residues: Large ribosomal subunit protein uL3 (217 aa).

The protein belongs to the universal ribosomal protein uL3 family. Part of the 50S ribosomal subunit. Forms a cluster with proteins L14 and L19.

One of the primary rRNA binding proteins, it binds directly near the 3'-end of the 23S rRNA, where it nucleates assembly of the 50S subunit. This is Large ribosomal subunit protein uL3 from Mycobacterium ulcerans (strain Agy99).